The chain runs to 449 residues: Acetolactate synthase small subunit 1, chloroplastic (449 aa).

The N-terminal 30 residues, 1–30 (MEHIQTRTTLSQLSTLPSDKRLGAIRFKCL), are a transit peptide targeting the chloroplast. 2 ACT domains span residues 31–98 (LVMK…DLSK) and 259–333 (TLSM…DITH).

Belongs to the acetolactate synthase small subunit family. As to quaternary structure, the acetolactate synthase complex contains both large catalytic subunits and small regulatory subunits.

The protein localises to the plastid. It is found in the chloroplast. The protein operates within amino-acid biosynthesis; L-isoleucine biosynthesis; L-isoleucine from 2-oxobutanoate: step 1/4. It participates in amino-acid biosynthesis; L-valine biosynthesis; L-valine from pyruvate: step 1/4. In terms of biological role, regulatory subunit of acetohydroxy-acid synthase. Probably involved in feedback inhibition by branched-chain amino acids. Not involved in herbicide tolerance. The chain is Acetolactate synthase small subunit 1, chloroplastic from Nicotiana plumbaginifolia (Leadwort-leaved tobacco).